Consider the following 67-residue polypeptide: Small ribosomal subunit protein eS27 (67 aa).

C22, C25, C41, and C44 together coordinate Zn(2+). Residues 22–44 (CPDCGNEQVTFSHAAMVVRCLVC) form a C4-type zinc finger.

Belongs to the eukaryotic ribosomal protein eS27 family. Part of the 30S ribosomal subunit. Zn(2+) is required as a cofactor.

The protein is Small ribosomal subunit protein eS27 of Pyrobaculum neutrophilum (strain DSM 2338 / JCM 9278 / NBRC 100436 / V24Sta) (Thermoproteus neutrophilus).